The sequence spans 356 residues: Phosphoribosylformylglycinamidine cyclo-ligase (356 aa).

It belongs to the AIR synthase family.

The protein resides in the cytoplasm. It catalyses the reaction 2-formamido-N(1)-(5-O-phospho-beta-D-ribosyl)acetamidine + ATP = 5-amino-1-(5-phospho-beta-D-ribosyl)imidazole + ADP + phosphate + H(+). The protein operates within purine metabolism; IMP biosynthesis via de novo pathway; 5-amino-1-(5-phospho-D-ribosyl)imidazole from N(2)-formyl-N(1)-(5-phospho-D-ribosyl)glycinamide: step 2/2. In Nitrobacter hamburgensis (strain DSM 10229 / NCIMB 13809 / X14), this protein is Phosphoribosylformylglycinamidine cyclo-ligase.